The chain runs to 1350 residues: Nicotinate hydroxylase hnxS (1350 aa).

Positions 49, 54, 89, 92, 133, and 135 each coordinate [2Fe-2S] cluster. Residues 164 to 193 (LVGTEEETESDMGAHSGSGDTGSRSSGSCG) are disordered. Positions 180–192 (GSGDTGSRSSGSC) are enriched in low complexity. Residues 256–445 (YGDAEQAWVK…TKIAVPMPSK (190 aa)) enclose the FAD-binding PCMH-type domain. FAD contacts are provided by residues 284–291 (LVTGASEV), 379–383 (CLAGN), D392, and K455. Residues Q793 and F824 each coordinate Mo-molybdopterin. Substrate contacts are provided by E828 and R906. Mo-molybdopterin is bound by residues R938 and A1107. E1281 serves as the catalytic Proton acceptor.

This sequence belongs to the xanthine dehydrogenase family. Requires [2Fe-2S] cluster as cofactor. It depends on FAD as a cofactor. The cofactor is Mo-molybdopterin.

Allopurinol inhibits catalytic activity in a linear fashion. Nicotinate hydroxylase, part of the hnx cluster involved in the purine degradation. The nicotinate hydroxylase hnxS accepts nicotinate as a substrate and catalyzes the first step of nicotinate catabolism. HnxS also accepts hypoxanthine, but not xanthine, as a substrate. The major facilitator-type transporters hxnP and hxnZ are probably involved in the uptake of nicotinate-derived metabolites, and the oxidoreductases hxnT and hxnY in the further metabolism of 6-OH nicotinic acid. In Emericella nidulans (strain FGSC A4 / ATCC 38163 / CBS 112.46 / NRRL 194 / M139) (Aspergillus nidulans), this protein is Nicotinate hydroxylase hnxS.